Reading from the N-terminus, the 312-residue chain is Olfactory receptor 1D5 (312 aa).

Residues 1–25 are Extracellular-facing; that stretch reads MDGDNQSENSQFLLLGISESPEQQQ. An N-linked (GlcNAc...) asparagine glycan is attached at Asn-5. Residues 26 to 49 traverse the membrane as a helical segment; sequence ILFWMFLSMYLVTVLGNVLIILAI. Topologically, residues 50–57 are cytoplasmic; it reads SSDSRLHT. The chain crosses the membrane as a helical span at residues 58-79; it reads PMYFFLANLSFTDLFFVTNTIP. At 80–100 the chain is on the extracellular side; it reads KMLVNLQSQNKAISYAGCLTQ. A disulfide bridge links Cys-97 with Cys-189. The chain crosses the membrane as a helical span at residues 101–120; sequence LYFLVSLVTLDNLILAVMAY. Topologically, residues 121-140 are cytoplasmic; sequence DRYVAICCPLHYVTAMSPGL. The chain crosses the membrane as a helical span at residues 141 to 158; that stretch reads CVLLLSLCWGLSVFYGLL. Residues 159–196 are Extracellular-facing; sequence LTLLLTRVTFCGPREIHYLFCDMYILLRLACSNTHIIH. The helical transmembrane segment at 197–220 threads the bilayer; that stretch reads TVLVATGCFIFLTPLGFMTTSYVR. Over 221 to 237 the chain is Cytoplasmic; that stretch reads IVRTILQIPSASKKYKA. The helical transmembrane segment at 238–260 threads the bilayer; that stretch reads FSTCASHLGVVSLFYGTLAMVYL. Residues 261 to 271 lie on the Extracellular side of the membrane; that stretch reads QPLHTYSMKDS. The helical transmembrane segment at 272–291 threads the bilayer; that stretch reads VATVMYAVVTPMMNPFIHSL. At 292-312 the chain is on the cytoplasmic side; the sequence is RNKDMHGALGRVLRRLFQRPK.

This sequence belongs to the G-protein coupled receptor 1 family.

It is found in the cell membrane. In terms of biological role, odorant receptor. The polypeptide is Olfactory receptor 1D5 (OR1D5) (Pan troglodytes (Chimpanzee)).